The sequence spans 342 residues: Holliday junction branch migration complex subunit RuvB (342 aa).

Residues 1–22 (MTLKPVREVSPGSQEGEERLEQ) form a disordered region. Residues 1–185 (MTLKPVREVS…FPIQERLGYY (185 aa)) are large ATPase domain (RuvB-L). Residues Leu24, Arg25, Gly66, Lys69, Thr70, Ser71, 132-134 (EDY), Arg175, Tyr185, and Arg222 each bind ATP. Thr70 lines the Mg(2+) pocket. The interval 186–256 (EPTELREIAV…IVETTLERLE (71 aa)) is small ATPAse domain (RuvB-S). The head domain (RuvB-H) stretch occupies residues 259-342 (GRGLDAMDRR…RPQGKQGSLI (84 aa)). Residues Arg295, Arg314, and Arg319 each contribute to the DNA site.

It belongs to the RuvB family. As to quaternary structure, homohexamer. Forms an RuvA(8)-RuvB(12)-Holliday junction (HJ) complex. HJ DNA is sandwiched between 2 RuvA tetramers; dsDNA enters through RuvA and exits via RuvB. An RuvB hexamer assembles on each DNA strand where it exits the tetramer. Each RuvB hexamer is contacted by two RuvA subunits (via domain III) on 2 adjacent RuvB subunits; this complex drives branch migration. In the full resolvosome a probable DNA-RuvA(4)-RuvB(12)-RuvC(2) complex forms which resolves the HJ.

The protein resides in the cytoplasm. The catalysed reaction is ATP + H2O = ADP + phosphate + H(+). Its function is as follows. The RuvA-RuvB-RuvC complex processes Holliday junction (HJ) DNA during genetic recombination and DNA repair, while the RuvA-RuvB complex plays an important role in the rescue of blocked DNA replication forks via replication fork reversal (RFR). RuvA specifically binds to HJ cruciform DNA, conferring on it an open structure. The RuvB hexamer acts as an ATP-dependent pump, pulling dsDNA into and through the RuvAB complex. RuvB forms 2 homohexamers on either side of HJ DNA bound by 1 or 2 RuvA tetramers; 4 subunits per hexamer contact DNA at a time. Coordinated motions by a converter formed by DNA-disengaged RuvB subunits stimulates ATP hydrolysis and nucleotide exchange. Immobilization of the converter enables RuvB to convert the ATP-contained energy into a lever motion, pulling 2 nucleotides of DNA out of the RuvA tetramer per ATP hydrolyzed, thus driving DNA branch migration. The RuvB motors rotate together with the DNA substrate, which together with the progressing nucleotide cycle form the mechanistic basis for DNA recombination by continuous HJ branch migration. Branch migration allows RuvC to scan DNA until it finds its consensus sequence, where it cleaves and resolves cruciform DNA. This Anaeromyxobacter sp. (strain Fw109-5) protein is Holliday junction branch migration complex subunit RuvB.